The following is a 335-amino-acid chain: uncharacterized protein (335 aa).

This is an uncharacterized protein from Escherichia coli (strain K12).